The following is a 690-amino-acid chain: Amino-acid acetyltransferase, mitochondrial (690 aa).

A disordered region spans residues 62–93; that stretch reads RFPSVKKPKPPIPRQNQGAVETQSGKENEKPG. Residues 75 to 84 are compositionally biased toward polar residues; the sequence is RQNQGAVETQ. In terms of domain architecture, N-acetyltransferase spans 508–679; the sequence is DGHHLTLDDP…DYEAVCRSIQ (172 aa).

The protein belongs to the acetyltransferase family.

It localises to the mitochondrion. It carries out the reaction L-glutamate + acetyl-CoA = N-acetyl-L-glutamate + CoA + H(+). It participates in amino-acid biosynthesis; L-arginine biosynthesis; N(2)-acetyl-L-ornithine from L-glutamate: step 1/4. In terms of biological role, N-acetylglutamate synthase involved in arginine biosynthesis. This chain is Amino-acid acetyltransferase, mitochondrial (arg2), found in Talaromyces stipitatus (strain ATCC 10500 / CBS 375.48 / QM 6759 / NRRL 1006) (Penicillium stipitatum).